A 1061-amino-acid chain; its full sequence is Ribonuclease E (1061 aa).

Residues Ala-39–Phe-119 enclose the S1 motif domain. The segment at Phe-57–Lys-112 is interaction with RNA. Positions Arg-169 to Thr-170 are interaction with RNA 5'-terminal monophosphate. Mg(2+) is bound by residues Asp-303 and Asp-346. Residues Cys-404 and Cys-407 each coordinate Zn(2+). The tract at residues Cys-404–Cys-407 is required for zinc-mediated homotetramerization and catalytic activity. Disordered stretches follow at residues Phe-532–Pro-565, Glu-586–Tyr-731, and Glu-752–Thr-822. The segment covering Asp-536–Pro-546 has biased composition (pro residues). The span at Ala-547–Pro-565 shows a compositional bias: low complexity. 3 stretches are compositionally biased toward basic and acidic residues: residues Ala-598 to Arg-608, Asn-615 to Arg-640, and Glu-652 to Ala-690. The segment covering Arg-796–Arg-814 has biased composition (basic residues). The segment at Ala-833 to Arg-850 is interaction with enolase. The interval Glu-1021–Glu-1061 is interaction with PNPase. Positions Pro-1031 to Glu-1061 are disordered. Residues Gly-1043–Ala-1055 show a composition bias toward low complexity.

Belongs to the RNase E/G family. RNase E subfamily. Component of the RNA degradosome, which is a multiprotein complex involved in RNA processing and mRNA degradation. Within the RNA degradosome, RNase E assembles into a homotetramer formed by a dimer of dimers. Tetramerization is essential for catalytic activity, but not for RNA-binding. Interacts with RhlB, PNPase (pnp) and enolase (eno). Interacts with DeaD at reduced temperature. The cofactor is Zn(2+). Mg(2+) is required as a cofactor.

It is found in the cytoplasm. It localises to the cell inner membrane. It carries out the reaction Endonucleolytic cleavage of single-stranded RNA in A- and U-rich regions.. Its activity is regulated as follows. The presence of a 5'-monophosphate on substrate RNA accelerates its cleavage by catalytically activating the enzyme. Binding to the membrane stabilizes protein structure and increases affinity for the substrate. Its function is as follows. Endoribonuclease that plays a central role in RNA processing and decay. Required for the maturation of 5S and 16S rRNAs and the majority of tRNAs. Also involved in the degradation of most mRNAs. Can also process other RNA species, such as RNAI, a molecule that controls the replication of ColE1 plasmid, and the cell division inhibitor DicF-RNA. It initiates the decay of RNAs by cutting them internally near their 5'-end. It is able to remove poly(A) tails by an endonucleolytic process. Required to initiate rRNA degradation during both starvation and quality control; acts after RNase PH (rph) exonucleolytically digests the 3'-end of the 16S rRNA. Degradation of 16S rRNA leads to 23S rRNA degradation. Processes the 3 tRNA(Pro) precursors immediately after the 3'-CCA to generate the mature ends. Prefers 5'-monophosphorylated substrates over 5'-triphosphorylated substrates. 5'-monophosphate-assisted cleavage requires at least 2 and preferably 3 or more unpaired 5'-terminal nucleotides. The optimal spacing between the 5' end and the scissile phosphate appears to be 8 nucleotides. Any sequence of unpaired nucleotides at the 5'-end is tolerated. This chain is Ribonuclease E, found in Escherichia coli (strain K12).